The sequence spans 498 residues: Glycerol kinase (498 aa).

Thr-12 contacts ADP. ATP is bound by residues Thr-12, Thr-13, and Ser-14. Thr-12 is a sn-glycerol 3-phosphate binding site. Position 16 (Arg-16) interacts with ADP. Residues Arg-82, Glu-83, Tyr-134, and Asp-244 each contribute to the sn-glycerol 3-phosphate site. 5 residues coordinate glycerol: Arg-82, Glu-83, Tyr-134, Asp-244, and Gln-245. ADP contacts are provided by Thr-266 and Gly-310. Residues Thr-266, Gly-310, Gln-314, and Gly-411 each coordinate ATP. 2 residues coordinate ADP: Gly-411 and Asn-415.

Belongs to the FGGY kinase family.

It catalyses the reaction glycerol + ATP = sn-glycerol 3-phosphate + ADP + H(+). It participates in polyol metabolism; glycerol degradation via glycerol kinase pathway; sn-glycerol 3-phosphate from glycerol: step 1/1. With respect to regulation, inhibited by fructose 1,6-bisphosphate (FBP). Its function is as follows. Key enzyme in the regulation of glycerol uptake and metabolism. Catalyzes the phosphorylation of glycerol to yield sn-glycerol 3-phosphate. This Chloroflexus aurantiacus (strain ATCC 29366 / DSM 635 / J-10-fl) protein is Glycerol kinase.